The primary structure comprises 309 residues: MALRLSFMGTPDFAVPVLHALLNAGHDIVAVYSQPPRPAGRRGLQLVSSPVQNAAEAKSIPVFTPQSLKTAEEQARFAALSVDAAVVVAYGILLPKAILEAPRFGCFNAHASLLPRWRGAAPIQRAIMAGDKETGMMIMQMNEGLDTGPIALSRSIAITENITAAELSDKLSHMGAELIVEALSALEKGQLTLTPQSLEGVSYASKIKKEETQIDWTKSAEVIHKYICALSPYPGCWCTMTIGGKPERVKILGSRLATGDSLGIGRIEAGHLIIHCGQGRIEITHLQRAGSRILDSSTFLRGANISAVF.

112–115 (SLLP) is a binding site for (6S)-5,6,7,8-tetrahydrofolate.

Belongs to the Fmt family.

It catalyses the reaction L-methionyl-tRNA(fMet) + (6R)-10-formyltetrahydrofolate = N-formyl-L-methionyl-tRNA(fMet) + (6S)-5,6,7,8-tetrahydrofolate + H(+). Functionally, attaches a formyl group to the free amino group of methionyl-tRNA(fMet). The formyl group appears to play a dual role in the initiator identity of N-formylmethionyl-tRNA by promoting its recognition by IF2 and preventing the misappropriation of this tRNA by the elongation apparatus. The protein is Methionyl-tRNA formyltransferase of Bartonella bacilliformis (strain ATCC 35685 / KC583 / Herrer 020/F12,63).